Consider the following 430-residue polypeptide: MSLGQRLALLASRLQEPQRVASFQRLCGVEVPLSSPAADEDAETEVRGAPGEPRRRGRQPGAEDSPAKADCCGAPNGVRNGLAAEPGPTGPRRAGSQRRNSLTGEEGELVKVSNLPLYYLFCLGTELGNELFYILFFPFWIWNLDPFVGRRLVIIWVLVMYLGQCTKDIIRWPRPASPPVIKLEVFYNSEYSMPSTHAMSGTAIPIAMFLLTYGRWQYPLIYGLILIPCWSSLVCLSRIYMGMHSILDVIAGFLYTILILIIFYPLVDLIDNFNQTYKYAPLIIIGLHLILGIFSFTLDTWSTSRGDTAEILGSGAGIACGSHAAYTLGLSLEPSLHMLPLAIPPLTVTLFGKAILRIVLGMLLVLFVRDIMKKITIPLACKLSSIPCHDIRQARQHMEVELPYRYITYGMVGFSITFLVPYVFSFIGIS.

The segment at 34–103 is disordered; that stretch reads SSPAADEDAE…AGSQRRNSLT (70 aa). At Ser101 the chain carries Phosphoserine. The residue at position 103 (Thr103) is a Phosphothreonine. The next 4 membrane-spanning stretches (helical) occupy residues 121–141, 152–172, 193–213, and 216–236; these read FCLG…PFWI, LVII…IIRW, MPST…LLTY, and WQYP…LVCL. A phosphatase sequence motif I region spans residues 167–175; it reads KDIIRWPRP. The tract at residues 194–197 is phosphatase sequence motif II; that stretch reads PSTH. His197 (proton donor) is an active-site residue. The tract at residues 237–248 is phosphatase sequence motif III; it reads SRIYMGMHSILD. The active-site Nucleophile is the His244. The next 5 membrane-spanning stretches (helical) occupy residues 246–266, 279–299, 311–331, 348–368, and 409–429; these read ILDV…FYPL, YAPL…FTLD, ILGS…LGLS, VTLF…VLFV, and YGMV…FIGI.

Belongs to the type 2 lipid phosphate phosphatase family. Highly expressed in liver and kidney. Expressed in epidermis, in the stratum granulosum and the stratum spinosum.

It localises to the endoplasmic reticulum membrane. Its subcellular location is the cell membrane. It catalyses the reaction sphinganine 1-phosphate + H2O = sphinganine + phosphate. The enzyme catalyses sphing-4-enine 1-phosphate + H2O = sphing-4-enine + phosphate. Its activity is regulated as follows. Inhibited by NaF, sodium orthovanadate, propanolol, and N-ethylmaleimide. In terms of biological role, specifically dephosphorylates sphingosine 1-phosphate (S1P), dihydro-S1P, and phyto-S1P. Does not act on ceramide 1-phosphate, lysophosphatidic acid or phosphatidic acid. Sphingosine-1-phosphate phosphatase activity is needed for efficient recycling of sphingosine into the sphingolipid synthesis pathway. Regulates the intracellular levels of the bioactive sphingolipid metabolite S1P that regulates diverse biological processes acting both as an extracellular receptor ligand or as an intracellular second messenger. Involved in efficient ceramide synthesis from exogenous sphingoid bases. Converts S1P to sphingosine, which is readily metabolized to ceramide via ceramide synthase. In concert with sphingosine kinase 2 (SphK2), recycles sphingosine into ceramide through a phosphorylation/dephosphorylation cycle. Regulates endoplasmic-to-Golgi trafficking of ceramides, resulting in the regulation of ceramide levels in the endoplasmic reticulum, preferentially long-chain ceramide species, and influences the anterograde membrane transport of both ceramide and proteins from the endoplasmic reticulum to the Golgi apparatus. The modulation of intracellular ceramide levels in turn regulates apoptosis. Via S1P levels, modulates resting tone, intracellular Ca(2+) and myogenic vasoconstriction in resistance arteries. Also involved in unfolded protein response (UPR) and ER stress-induced autophagy via regulation of intracellular S1P levels. Involved in the regulation of epidermal homeostasis and keratinocyte differentiation. In Mus musculus (Mouse), this protein is Sphingosine-1-phosphate phosphatase 1.